Here is a 419-residue protein sequence, read N- to C-terminus: Putative polyketide beta-ketoacyl synthase 2 (419 aa).

Residues 10-413 (TRRTAVTGIG…GSNAALVLRP (404 aa)) form the Ketosynthase family 3 (KS3) domain.

It belongs to the thiolase-like superfamily. Beta-ketoacyl-ACP synthases family.

Its pathway is antibiotic biosynthesis; curamycin biosynthesis. The sequence is that of Putative polyketide beta-ketoacyl synthase 2 (curB) from Streptomyces cyaneus (Streptomyces curacoi).